The chain runs to 112 residues: uncharacterized protein (112 aa).

The next 2 helical transmembrane spans lie at 44-63 (VITGIVGYVFVVVYVVLHSL) and 68-90 (LAALAMALVFFAITGEYGGKLVH).

It is found in the cell membrane. This is an uncharacterized protein from Archaeoglobus fulgidus (strain ATCC 49558 / DSM 4304 / JCM 9628 / NBRC 100126 / VC-16).